The primary structure comprises 1345 residues: Rho guanine nucleotide exchange factor 10 (1345 aa).

Disordered stretches follow at residues 1-84 (MEQG…PAKL) and 99-120 (TPLQ…GVGL). Over residues 22-39 (NNEEEGELFDFDSGDEVP) the composition is skewed to acidic residues. Residues 40-54 (EADRQVPSADDRTRG) are compositionally biased toward basic and acidic residues. Over residues 102–111 (QEDQPSSPDA) the composition is skewed to polar residues. Serine 157 bears the Phosphoserine mark. Disordered regions lie at residues 158–195 (VEEE…SALA) and 207–273 (MENP…IPRS). Over residues 171 to 191 (QCNSLSSEDLPHSSEQGSQEG) the composition is skewed to polar residues. Positions 224–239 (DSEPDEMIYDDVENGE) are enriched in acidic residues. Over residues 242 to 255 (GNSSPEYGWSSSEF) the composition is skewed to low complexity. Positions 307-335 (GAMEIQQAKQRQERKMQKLMKAAKEGTKD) form a coiled coil. Serine 355 is subject to Phosphoserine. The region spanning 397–584 (VRRYILGSIV…ETLAEKLNER (188 aa)) is the DH domain. 2 disordered regions span residues 1202 to 1237 (DRAR…QPDT) and 1253 to 1306 (KNDL…RASS). Positions 1256 to 1271 (LSSSSGSLNLSHGSSS) are enriched in low complexity. The residue at position 1262 (serine 1262) is a Phosphoserine. At glutamine 1314 the chain carries N5-methylglutamine.

In terms of processing, methylated at Gln-1314 by N6AMT1. In terms of tissue distribution, ubiquitously expressed.

Its function is as follows. May play a role in developmental myelination of peripheral nerves. This chain is Rho guanine nucleotide exchange factor 10 (Arhgef10), found in Mus musculus (Mouse).